A 509-amino-acid polypeptide reads, in one-letter code: Cytochrome P450 monooxygenase FUP2 (509 aa).

2 helical membrane-spanning segments follow: residues 16–36 and 224–244; these read FGLA…YGCF and MVEA…FGIA. A heme-binding site is contributed by Cys-450.

The protein belongs to the cytochrome P450 family. The cofactor is heme.

It localises to the membrane. Its pathway is secondary metabolite biosynthesis. Cytochrome P450 monooxygenase; part of the gene cluster that mediates the biosynthesis of the mycotoxin fusaproliferin (FUP) that belongs to the class of bicyclic sesterterpenoids. FUP2 introduces a hydroxyl group at the C-24 position resulting in the formation of preterpestacin IIa, which can be further oxidized. The oxidation of the hydroxyl group at C-24 to an aldehyde and further to a carboxylic group takes place via unspecific alcohol and aldehyde dehydrogenases and leads to the shunt products preterpestacin IIc and preterpestacin IIb, respectively. The FUP biosynthetic pathway starts with the enzyme encoded by FUP1 that combines a C-terminal prenyltransferase domain responsible for the synthesis of geranylgeranyl diphosphate with the N-terminal terpene cyclase domain, to yield preterpestacin I. Preterpestacin I is then decorated by oxygenation steps that are catalyzed by two cytochrome P450 monooxygenases. First, FUP2 introduces a hydroxyl group at the C-24 position resulting in the formation of preterpestacin IIa. The second P450 monooxygenase catalyzes the hydroxylation at C-16 and C-17 of preterpestacin IIa, producing preterpestacin III. Subsequently, the FAD-dependent oxidoreductase FUP4 catalyzes the oxidation of the hydroxy group at the C-16 position to a keto group, leading to the formation of (-)-terpestacin, which is the immediate precursor of FUP. The final step in the proposed biosynthetic pathway is the addition of an acetyl group at the C-24 position of terpestacin, which is catalyzed by the acetyltransferase FUP5. The chain is Cytochrome P450 monooxygenase FUP2 from Fusarium proliferatum (strain ET1) (Orchid endophyte fungus).